A 117-amino-acid polypeptide reads, in one-letter code: MRVKTGVVRRRRHKKILKLARGFYSGRRKHFRKAKEQLERSMCYAFRDRKQKKRDFRRLWITRINAACKMNGVSYSRFIHALKLANIELDRKTLADMAMNDINAFNAVLASVKNKLK.

Belongs to the bacterial ribosomal protein bL20 family.

Binds directly to 23S ribosomal RNA and is necessary for the in vitro assembly process of the 50S ribosomal subunit. It is not involved in the protein synthesizing functions of that subunit. This chain is Large ribosomal subunit protein bL20, found in Helicobacter hepaticus (strain ATCC 51449 / 3B1).